The sequence spans 129 residues: C-type natriuretic peptide 1 (129 aa).

A signal peptide spans 1–24 (MSYKRGTCLGFIMLLMVSHHHTKG). Residues 25-107 (KPLSSLQNLS…SRRYRQRNKK (83 aa)) constitute a propeptide that is removed on maturation. An intrachain disulfide couples Cys113 to Cys129.

The protein belongs to the natriuretic peptide family.

It localises to the secreted. Hormone which plays a role in endochondral ossification through regulation of cartilaginous growth plate chondrocytes proliferation and differentiation. May also be vasoactive and natriuretic. May be important for freshwater adaptation. This chain is C-type natriuretic peptide 1, found in Aquarana catesbeiana (American bullfrog).